Consider the following 426-residue polypeptide: Histidine--tRNA ligase (426 aa).

This sequence belongs to the class-II aminoacyl-tRNA synthetase family.

It is found in the cytoplasm. It carries out the reaction tRNA(His) + L-histidine + ATP = L-histidyl-tRNA(His) + AMP + diphosphate + H(+). The chain is Histidine--tRNA ligase from Saccharolobus shibatae (strain ATCC 51178 / DSM 5389 / JCM 8931 / NBRC 15437 / B12) (Sulfolobus shibatae).